A 365-amino-acid chain; its full sequence is Probable dual-specificity RNA methyltransferase RlmN (365 aa).

The Proton acceptor role is filled by Glu108. One can recognise a Radical SAM core domain in the interval 114 to 352; the sequence is YPDRNTVCIS…SCTVRDTRGR (239 aa). Cysteines 121 and 358 form a disulfide. [4Fe-4S] cluster-binding residues include Cys128, Cys132, and Cys135. Residues 179 to 180, Ser213, 236 to 238, and Asn315 each bind S-adenosyl-L-methionine; these read GE and SLH. The active-site S-methylcysteine intermediate is Cys358.

It belongs to the radical SAM superfamily. RlmN family. [4Fe-4S] cluster serves as cofactor.

It localises to the cytoplasm. The catalysed reaction is adenosine(2503) in 23S rRNA + 2 reduced [2Fe-2S]-[ferredoxin] + 2 S-adenosyl-L-methionine = 2-methyladenosine(2503) in 23S rRNA + 5'-deoxyadenosine + L-methionine + 2 oxidized [2Fe-2S]-[ferredoxin] + S-adenosyl-L-homocysteine. It carries out the reaction adenosine(37) in tRNA + 2 reduced [2Fe-2S]-[ferredoxin] + 2 S-adenosyl-L-methionine = 2-methyladenosine(37) in tRNA + 5'-deoxyadenosine + L-methionine + 2 oxidized [2Fe-2S]-[ferredoxin] + S-adenosyl-L-homocysteine. Specifically methylates position 2 of adenine 2503 in 23S rRNA and position 2 of adenine 37 in tRNAs. The polypeptide is Probable dual-specificity RNA methyltransferase RlmN (Mycolicibacterium gilvum (strain PYR-GCK) (Mycobacterium gilvum (strain PYR-GCK))).